The following is a 928-amino-acid chain: MAKVPELEDTFLQAQPAPQLSPGIQEDCCVQLLGKGLLVYPEETVYLAAEGQPGGEQGGGEKGEDPELPGAVKSEMHLNNGNFSSEEEDADNHDSKTKAADQYLSQKKTITQIVKDKKKQTQLTLQWLEENYIVCEGVCLPRCILYAHYLDFCRKEKLEPACAATFGKTIRQKFPLLTTRRLGTRGHSKYHYYGIGIKESSAYYHSVYSGKGLTRFSGSKLKNEGGFTRKYSLSSKTGTLLPEFPSAQHLVYQGCISKDKVDTLIMMYKTHCQCILDNAINGNFEEIQHFLLHFWQGMPDHLLPLLENPVIIDIFCVCDSILYKVLTDVLIPATMQEMPESLLADIRNFAKNWEQWVVSSLENLPEALTDKKIPIVRRFVSSLKRQTSFLHLAQIARPALFDQHVVNSMVSDIERVDLNSIGSQALLTISGSTDTESGIYTEHDSITVFQELKDLLKKNATVEAFIEWLDTVVEQRVIKTSKQNGRSLKKRAQDFLLKWSFFGARVMHNLTLNNASSFGSFHLIRMLLDEYILLAMETQFNNDKEQELQNLLDKYMKNSDASKAAFTASPSSCFLANRNKGSMVSSDAVKNESHVETTYLPLPSSQPGGLGPALHQFPAGNTDNMPLTGQMELSQIAGHLMTPPISPAMASRGSVINQGPMAGRPPSVGPVLSAPSHCSTYPEPIYPTLPQANHDFYSTSSNYQTVFRAQPHSTSGLYPHHTEHGRCMAWTEQQLSRDFFSGSCAGSPYNSRPPSSYGPSLQAQDSHNMQFLNTGSFNFLSNTGAASCQGATLPPNSPNGYYGSNINYPESHRLGSMVNQHVSVISSIRSLPPYSDIHDPLNILDDSGRKQTSSFYTDTSSPVACRTPVLASSLQTPIPSSSSQCMYGTSNQYPAQETLDSHGTSSREMVSSLPPINTVFMGTAAGGT.

Disordered regions lie at residues 1 to 20 (MAKVPELEDTFLQAQPAPQL) and 50 to 98 (EGQP…SKTK). Positions 124–199 (TLQWLEENYI…YHYYGIGIKE (76 aa)) form a DNA-binding region, RFX-type winged-helix.

Belongs to the RFX family. As to quaternary structure, interacts with RFX3. As to expression, expressed in pancreas. Expressed in pancreatic beta-cells (insulin-positive cells) and alpha-cells (glucagon-positive cells) (at protein level). Specifically expressed in pancreas, small intestine and colon. Expressed in endocrine cells in the islets.

It is found in the nucleus. Transcription factor required to direct islet cell differentiation during endocrine pancreas development. Specifically required for the differentiation of 4 of the 5 islet cell types and for the production of insulin. Not required for pancreatic PP (polypeptide-producing) cells differentiation. Acts downstream of NEUROG3 and regulates the transcription factors involved in beta-cell maturation and function, thereby restricting the expression of the beta-cell differentiation and specification genes, and thus the beta-cell fate choice. Activates transcription by forming a heterodimer with RFX3 and binding to the X-box in the promoter of target genes. Involved in glucose-stimulated insulin secretion by promoting insulin and L-type calcium channel gene transcription. This is DNA-binding protein RFX6 (RFX6) from Homo sapiens (Human).